Here is a 486-residue protein sequence, read N- to C-terminus: Vacuolar protein sorting-associated protein 73 (486 aa).

Topologically, residues 1-26 (MNRILSSASLLSNVSMPRQNKHKITK) are cytoplasmic. Residues 27-47 (ALCYAIIVASIGSIQFGYHLS) form a helical membrane-spanning segment. Residues 48 to 90 (ELNAPQQVLSCSEFDIPMEGYPYDRTWLGKRGYKQCIPLNDEQ) are Mitochondrial intermembrane-facing. A helical transmembrane segment spans residues 91–111 (IGIVTSVFCIGGILGSYFATS). Topologically, residues 112–119 (LANIYGRK) are cytoplasmic. A helical membrane pass occupies residues 120–140 (FSSLINCTLNIVGSLIIFNSN). The Mitochondrial intermembrane segment spans residues 141–146 (SYRGLI). The chain crosses the membrane as a helical span at residues 147–167 (IGRILVGISCGSLIVIIPLFI). The Cytoplasmic segment spans residues 168–178 (KEVAPSGWEGL). The helical transmembrane segment at 179–199 (LGSMTQICIRLGVLLTQGIAL) threads the bilayer. The Mitochondrial intermembrane segment spans residues 200–208 (PLTDSYRWR). A helical transmembrane segment spans residues 209-229 (WILFGSFLIAVLNFFMWFIVD). Residues 230–305 (ESPKWLLAHG…RDRTNVKSRH (76 aa)) lie on the Cytoplasmic side of the membrane. Residues 306-326 (VITVLLFGQQFCGINSIVLYG) traverse the membrane as a helical segment. The Mitochondrial intermembrane segment spans residues 327-342 (TKIISQLYPQHAIRIN). Residues 343-363 (FFISMVNVLVTILVSLLIHSL) traverse the membrane as a helical segment. Over 364–366 (PRK) the chain is Cytoplasmic. A helical membrane pass occupies residues 367 to 387 (PLLMTSTVLVSVTAFIMGIAM). The Mitochondrial intermembrane segment spans residues 388–396 (NHNKMNLLI). Residues 397-417 (VFSFIYMGVFTMGLNPLPFII) traverse the membrane as a helical segment. Residues 418–432 (MREVSKPQDMVLAQR) lie on the Cytoplasmic side of the membrane. Residues 433–453 (YGTICNWVGTFIIAYTFPIIH) traverse the membrane as a helical segment. Residue D454 is a topological domain, mitochondrial intermembrane. The helical transmembrane segment at 455-475 (VLSGYVFIIFAIIACSISAFI) threads the bilayer. Over 476 to 486 (WKKVPETKRSG) the chain is Cytoplasmic.

This sequence belongs to the major facilitator superfamily. Sugar transporter (TC 2.A.1.1) family.

The protein resides in the mitochondrion membrane. Its function is as follows. May be involved in vacuolar protein sorting. This is Vacuolar protein sorting-associated protein 73 (VPS73) from Saccharomyces cerevisiae (strain ATCC 204508 / S288c) (Baker's yeast).